A 98-amino-acid chain; its full sequence is Integration host factor subunit alpha (98 aa).

Residues 49 to 70 (FGNFDLRDKNQRPGRNPKTGED) are disordered.

Belongs to the bacterial histone-like protein family. In terms of assembly, heterodimer of an alpha and a beta chain.

In terms of biological role, this protein is one of the two subunits of integration host factor, a specific DNA-binding protein that functions in genetic recombination as well as in transcriptional and translational control. This chain is Integration host factor subunit alpha, found in Sodalis glossinidius (strain morsitans).